A 203-amino-acid chain; its full sequence is NAD(P)H dehydrogenase (quinone) (203 aa).

The 188-residue stretch at 7-194 (VLVLYHSSYG…SLARKQGAHV (188 aa)) folds into the Flavodoxin-like domain. Residues 13–18 (SSYGHI) and 82–84 (TRF) each bind FMN. Residue Tyr-15 coordinates NAD(+). Trp-102 lines the substrate pocket. FMN contacts are provided by residues 117 to 122 (STGTGG) and His-137.

The protein belongs to the WrbA family. FMN serves as cofactor.

The enzyme catalyses a quinone + NADH + H(+) = a quinol + NAD(+). The catalysed reaction is a quinone + NADPH + H(+) = a quinol + NADP(+). This Parvibaculum lavamentivorans (strain DS-1 / DSM 13023 / NCIMB 13966) protein is NAD(P)H dehydrogenase (quinone).